A 470-amino-acid polypeptide reads, in one-letter code: ATP synthase subunit beta (470 aa).

Residue G157–T164 coordinates ATP.

The protein belongs to the ATPase alpha/beta chains family. F-type ATPases have 2 components, CF(1) - the catalytic core - and CF(0) - the membrane proton channel. CF(1) has five subunits: alpha(3), beta(3), gamma(1), delta(1), epsilon(1). CF(0) has three main subunits: a(1), b(2) and c(9-12). The alpha and beta chains form an alternating ring which encloses part of the gamma chain. CF(1) is attached to CF(0) by a central stalk formed by the gamma and epsilon chains, while a peripheral stalk is formed by the delta and b chains.

It is found in the cell membrane. The catalysed reaction is ATP + H2O + 4 H(+)(in) = ADP + phosphate + 5 H(+)(out). In terms of biological role, produces ATP from ADP in the presence of a proton gradient across the membrane. The catalytic sites are hosted primarily by the beta subunits. The sequence is that of ATP synthase subunit beta from Pelotomaculum thermopropionicum (strain DSM 13744 / JCM 10971 / SI).